A 147-amino-acid polypeptide reads, in one-letter code: Phage-like element PBSX protein XkdM (147 aa).

The protein to B.subtilis YqbM.

The chain is Phage-like element PBSX protein XkdM (xkdM) from Bacillus subtilis (strain 168).